The sequence spans 605 residues: DNA primase (605 aa).

A CHC2-type zinc finger spans residues 38-62 (CPFHDEKTPSFTVSEDKQICHCFGC). Residues 260–341 (DEIVLLEGFM…NVFVIQLPSG (82 aa)) enclose the Toprim domain. Mg(2+) contacts are provided by Glu266, Asp310, and Asp312.

This sequence belongs to the DnaG primase family. Monomer. Interacts with DnaB. Zn(2+) is required as a cofactor. Mg(2+) serves as cofactor.

The enzyme catalyses ssDNA + n NTP = ssDNA/pppN(pN)n-1 hybrid + (n-1) diphosphate.. In terms of biological role, RNA polymerase that catalyzes the synthesis of short RNA molecules used as primers for DNA polymerase during DNA replication. This chain is DNA primase, found in Staphylococcus aureus (strain MSSA476).